A 402-amino-acid polypeptide reads, in one-letter code: Phosphoglycerate kinase (402 aa).

Residues 24–26 (DFN), Arg40, 63–66 (HFGR), Arg122, and Arg155 contribute to the substrate site. ATP is bound by residues Lys206, Gly297, Glu328, and 357-360 (GGDS).

The protein belongs to the phosphoglycerate kinase family. In terms of assembly, monomer.

It localises to the cytoplasm. It carries out the reaction (2R)-3-phosphoglycerate + ATP = (2R)-3-phospho-glyceroyl phosphate + ADP. It functions in the pathway carbohydrate degradation; glycolysis; pyruvate from D-glyceraldehyde 3-phosphate: step 2/5. This is Phosphoglycerate kinase from Synechococcus elongatus (strain ATCC 33912 / PCC 7942 / FACHB-805) (Anacystis nidulans R2).